Reading from the N-terminus, the 114-residue chain is BolA-like protein DDB_G0274169 (114 aa).

Over residues 88–98 (TQWKKNNQTKI) the composition is skewed to polar residues. Positions 88-114 (TQWKKNNQTKINVDDDKSPSCKGGFGK) are disordered.

This sequence belongs to the BolA/IbaG family.

In Dictyostelium discoideum (Social amoeba), this protein is BolA-like protein DDB_G0274169.